A 96-amino-acid polypeptide reads, in one-letter code: Protein Vpr (96 aa).

A homooligomerization region spans residues 1–42 (MEQPPEDQGPQREPYNEWTLELLEELKHEAVRHFPREWLHGL). A phosphoserine; by host mark is found at Ser-79 and Ser-96.

This sequence belongs to the HIV-1 VPR protein family. Homooligomer, may form homodimer. Interacts with p6-gag region of the Pr55 Gag precursor protein through a (Leu-X-X)4 motif near the C-terminus of the P6gag protein. Interacts with host UNG. May interact with host RAD23A/HHR23A. Interacts with host VPRBP/DCAF1, leading to hijack the CUL4A-RBX1-DDB1-DCAF1/VPRBP complex, mediating ubiquitination of host proteins such as TERT and ZGPAT and arrest of the cell cycle in G2 phase. Post-translationally, phosphorylated on several residues by host. These phosphorylations regulate VPR activity for the nuclear import of the HIV-1 pre-integration complex.

It is found in the virion. Its subcellular location is the host nucleus. The protein localises to the host extracellular space. In terms of biological role, during virus replication, may deplete host UNG protein, and incude G2-M cell cycle arrest. Acts by targeting specific host proteins for degradation by the 26S proteasome, through association with the cellular CUL4A-DDB1 E3 ligase complex by direct interaction with host VPRPB/DCAF-1. Cell cycle arrest reportedly occurs within hours of infection and is not blocked by antiviral agents, suggesting that it is initiated by the VPR carried into the virion. Additionally, VPR induces apoptosis in a cell cycle dependent manner suggesting that these two effects are mechanistically linked. Detected in the serum and cerebrospinal fluid of AIDS patient, VPR may also induce cell death to bystander cells. Functionally, during virus entry, plays a role in the transport of the viral pre-integration (PIC) complex to the host nucleus. This function is crucial for viral infection of non-dividing macrophages. May act directly at the nuclear pore complex, by binding nucleoporins phenylalanine-glycine (FG)-repeat regions. In Homo sapiens (Human), this protein is Protein Vpr.